The chain runs to 284 residues: Quinate/shikimate dehydrogenase (NAD(+)) (284 aa).

Residues S18 and T70 each contribute to the shikimate site. Residues 18–20 (SRT) and T70 each bind L-quinate. Y73 serves as the catalytic Proton acceptor. Positions 74, 95, and 111 each coordinate shikimate. Positions 74, 95, and 111 each coordinate L-quinate. NAD(+) is bound by residues 137-138 (GG), D159, R164, 203-206 (TPMG), A214, V229, and G252. Q259 lines the shikimate pocket. An L-quinate-binding site is contributed by Q259.

Belongs to the shikimate dehydrogenase family. Homodimer.

The enzyme catalyses L-quinate + NAD(+) = 3-dehydroquinate + NADH + H(+). The catalysed reaction is shikimate + NAD(+) = 3-dehydroshikimate + NADH + H(+). Its pathway is metabolic intermediate biosynthesis; chorismate biosynthesis; chorismate from D-erythrose 4-phosphate and phosphoenolpyruvate: step 4/7. The protein operates within aromatic compound metabolism; 3,4-dihydroxybenzoate biosynthesis; 3-dehydroquinate from D-quinate (NAD(+) route). In terms of biological role, involved in the biosynthesis of the chorismate, which leads to the biosynthesis of aromatic amino acids, and plays a key role in the quinate degradation pathway. Catalyzes the NAD(+)-dependent oxidation of both quinate and shikimate to 3-dehydroquinate and 3-dehydroshikimate, respectively. It can only use NAD. The polypeptide is Quinate/shikimate dehydrogenase (NAD(+)) (Corynebacterium efficiens (strain DSM 44549 / YS-314 / AJ 12310 / JCM 11189 / NBRC 100395)).